The following is a 318-amino-acid chain: Beta-ketoacyl-[acyl-carrier-protein] synthase III (318 aa).

Catalysis depends on residues cysteine 113 and histidine 245. The segment at 246 to 250 (QANIR) is ACP-binding. Asparagine 275 is an active-site residue.

This sequence belongs to the thiolase-like superfamily. FabH family. Homodimer.

It localises to the cytoplasm. The enzyme catalyses malonyl-[ACP] + acetyl-CoA + H(+) = 3-oxobutanoyl-[ACP] + CO2 + CoA. It participates in lipid metabolism; fatty acid biosynthesis. Functionally, catalyzes the condensation reaction of fatty acid synthesis by the addition to an acyl acceptor of two carbons from malonyl-ACP. Catalyzes the first condensation reaction which initiates fatty acid synthesis and may therefore play a role in governing the total rate of fatty acid production. Possesses both acetoacetyl-ACP synthase and acetyl transacylase activities. Its substrate specificity determines the biosynthesis of branched-chain and/or straight-chain of fatty acids. In Wolbachia pipientis subsp. Culex pipiens (strain wPip), this protein is Beta-ketoacyl-[acyl-carrier-protein] synthase III.